A 923-amino-acid chain; its full sequence is Protein translocase subunit SecA (923 aa).

ATP-binding positions include Gln86, 104–108 (GEGKT), and Asp512. Positions 906, 908, 917, and 918 each coordinate Zn(2+).

The protein belongs to the SecA family. In terms of assembly, monomer and homodimer. Part of the essential Sec protein translocation apparatus which comprises SecA, SecYEG and auxiliary proteins SecDF-YajC and YidC. It depends on Zn(2+) as a cofactor.

Its subcellular location is the cell inner membrane. It localises to the cytoplasm. It carries out the reaction ATP + H2O + cellular proteinSide 1 = ADP + phosphate + cellular proteinSide 2.. Functionally, part of the Sec protein translocase complex. Interacts with the SecYEG preprotein conducting channel. Has a central role in coupling the hydrolysis of ATP to the transfer of proteins into and across the cell membrane, serving both as a receptor for the preprotein-SecB complex and as an ATP-driven molecular motor driving the stepwise translocation of polypeptide chains across the membrane. The polypeptide is Protein translocase subunit SecA (Caulobacter vibrioides (strain ATCC 19089 / CIP 103742 / CB 15) (Caulobacter crescentus)).